A 480-amino-acid polypeptide reads, in one-letter code: Cysteine--tRNA ligase (480 aa).

Cys-29 is a binding site for Zn(2+). Positions 31–41 (PTVYADPHLGH) match the 'HIGH' region motif. Positions 220, 245, and 249 each coordinate Zn(2+). The 'KMSKS' region motif lies at 276-280 (KMAKS). Lys-279 serves as a coordination point for ATP.

This sequence belongs to the class-I aminoacyl-tRNA synthetase family. Monomer. The cofactor is Zn(2+).

The protein resides in the cytoplasm. The enzyme catalyses tRNA(Cys) + L-cysteine + ATP = L-cysteinyl-tRNA(Cys) + AMP + diphosphate. This is Cysteine--tRNA ligase from Thermus thermophilus (strain ATCC 27634 / DSM 579 / HB8).